The following is a 62-amino-acid chain: MSQQSLNAPGPGAEDGNDPEAVTGGQTFASAQAADDLLDEIDSVLESNAETFVRSFVQKGGQ.

The interval 1–29 (MSQQSLNAPGPGAEDGNDPEAVTGGQTFA) is disordered. Positions 21-56 (AVTGGQTFASAQAADDLLDEIDSVLESNAETFVRSF) are ARC ATPase binding. A Deamidated glutamine modification is found at Q62. Residue Q62 forms an Isoglutamyl lysine isopeptide (Gln-Lys) (interchain with K-? in acceptor proteins) linkage.

The protein belongs to the prokaryotic ubiquitin-like protein family. In terms of assembly, strongly interacts with the proteasome-associated ATPase ARC through a hydrophobic interface; the interacting region of Pup lies in its C-terminal half. There is one Pup binding site per ARC hexamer ring. Is modified by deamidation of its C-terminal glutamine to glutamate by the deamidase Dop, a prerequisite to the subsequent pupylation process.

The protein operates within protein degradation; proteasomal Pup-dependent pathway. Its function is as follows. Protein modifier that is covalently attached to lysine residues of substrate proteins, thereby targeting them for proteasomal degradation. The tagging system is termed pupylation. This is Prokaryotic ubiquitin-like protein Pup from Brachybacterium faecium (strain ATCC 43885 / DSM 4810 / JCM 11609 / LMG 19847 / NBRC 14762 / NCIMB 9860 / 6-10).